The primary structure comprises 126 residues: UPF0102 protein TP_0913 (126 aa).

The protein belongs to the UPF0102 family.

The polypeptide is UPF0102 protein TP_0913 (Treponema pallidum (strain Nichols)).